Here is a 182-residue protein sequence, read N- to C-terminus: U1 small nuclear ribonucleoprotein C (182 aa).

The segment at 4–36 adopts a Matrin-type zinc-finger fold; that stretch reads YLCDYCQVWLTHDSQSVRKAHNAGRAHIQNVQD. A disordered region spans residues 129–182; sequence PQTTASSNTQLTQQQQSLPQTNEHQRARTHSNANNHFTKTHHQGQRSHQRFVRA. Low complexity predominate over residues 130–150; that stretch reads QTTASSNTQLTQQQQSLPQTN. Residues 166–182 show a composition bias toward basic residues; that stretch reads TKTHHQGQRSHQRFVRA.

It belongs to the U1 small nuclear ribonucleoprotein C family. U1 snRNP is composed of the 7 core Sm proteins smb1, smd1, smd2, smd3, sme1, smf1 and smg1 (Sm proteins B, D1, D2, D3, E, F and G, respectively) that assemble in a heptameric protein ring on the Sm site of the small nuclear RNA to form the core snRNP, and at least 9 U1 snRNP-specific proteins usp101/U1-70K, usp102/U1-A, usp103/U1-C, usp106/LUC7, usp105/PRP39, usp104/PRP40, usp107/U1-H, usp108/U1-J and usp109/U1-L. usp103/U1-C interacts with U1 snRNA and the 5' splice-site region of the pre-mRNA.

It localises to the nucleus. Its function is as follows. Component of the spliceosomal U1 snRNP, which is essential for recognition of the pre-mRNA 5' splice-site and the subsequent assembly of the spliceosome. usp103/U1-C is directly involved in initial 5' splice-site recognition for both constitutive and regulated alternative splicing. The interaction with the 5' splice-site seems to precede base-pairing between the pre-mRNA and the U1 snRNA. Stimulates commitment or early (E) complex formation by stabilizing the base pairing of the 5' end of the U1 snRNA and the 5' splice-site region. In Schizosaccharomyces pombe (strain 972 / ATCC 24843) (Fission yeast), this protein is U1 small nuclear ribonucleoprotein C (usp103).